The following is a 129-amino-acid chain: Succinate dehydrogenase cytochrome b556 subunit (129 aa).

Topologically, residues 1–26 (MIRNVKKQRPVNLDLQTIRFPITAIA) are cytoplasmic. Residues 27 to 52 (SILHRVSGVITFIAVGILLWLLGTSL) traverse the membrane as a helical segment. The Periplasmic segment spans residues 53–68 (SSPEGFQQAADIMDGF). The chain crosses the membrane as a helical span at residues 69–89 (IVKFIMWGILTALAYHVIVGI). His84 provides a ligand contact to heme. Over 90-108 (RHMLMDFGYLEETFEAGQR) the chain is Cytoplasmic. Residues 109-129 (SAKISFVITVVLSLLAGVLVW) form a helical membrane-spanning segment.

Belongs to the cytochrome b560 family. Part of an enzyme complex containing four subunits: a flavoprotein, an iron-sulfur protein, plus two membrane-anchoring proteins, SdhC and SdhD. The complex can form homotrimers. The cofactor is heme.

The protein resides in the cell inner membrane. The protein operates within carbohydrate metabolism; tricarboxylic acid cycle. Its function is as follows. Membrane-anchoring subunit of succinate dehydrogenase (SDH). The chain is Succinate dehydrogenase cytochrome b556 subunit (sdhC) from Salmonella typhi.